The sequence spans 132 residues: Small ribosomal subunit protein uS8 (132 aa).

It belongs to the universal ribosomal protein uS8 family. Part of the 30S ribosomal subunit. Contacts proteins S5 and S12.

Functionally, one of the primary rRNA binding proteins, it binds directly to 16S rRNA central domain where it helps coordinate assembly of the platform of the 30S subunit. The sequence is that of Small ribosomal subunit protein uS8 from Mycobacterium leprae (strain Br4923).